The chain runs to 254 residues: Isoprenyl transferase (254 aa).

Asp-12 is an active-site residue. Asp-12 contributes to the Mg(2+) binding site. Substrate contacts are provided by residues 13-16 (GNGR), Trp-17, Arg-25, His-29, and 57-59 (SSE). The Proton acceptor role is filled by Asn-60. Residues Trp-61, Arg-63, Arg-180, and 186–188 (RLS) contribute to the substrate site. A Mg(2+)-binding site is contributed by Glu-199.

This sequence belongs to the UPP synthase family. Homodimer. Mg(2+) serves as cofactor.

Functionally, catalyzes the condensation of isopentenyl diphosphate (IPP) with allylic pyrophosphates generating different type of terpenoids. The protein is Isoprenyl transferase of Brucella abortus biovar 1 (strain 9-941).